A 220-amino-acid polypeptide reads, in one-letter code: 7-cyano-7-deazaguanine synthase (220 aa).

7-17 (LSGGLDSAVCL) contributes to the ATP binding site. Residues Cys-191, Cys-199, Cys-202, and Cys-205 each contribute to the Zn(2+) site.

This sequence belongs to the QueC family. Homodimer. Requires Zn(2+) as cofactor.

It catalyses the reaction 7-carboxy-7-deazaguanine + NH4(+) + ATP = 7-cyano-7-deazaguanine + ADP + phosphate + H2O + H(+). The protein operates within purine metabolism; 7-cyano-7-deazaguanine biosynthesis. In terms of biological role, catalyzes the ATP-dependent conversion of 7-carboxy-7-deazaguanine (CDG) to 7-cyano-7-deazaguanine (preQ(0)). This Desulforudis audaxviator (strain MP104C) protein is 7-cyano-7-deazaguanine synthase.